Here is a 176-residue protein sequence, read N- to C-terminus: uncharacterized protein (176 aa).

Residues 87–100 (ASASSQLRASRVQS) are compositionally biased toward low complexity. The segment at 87 to 109 (ASASSQLRASRVQSGTRQSARAG) is disordered.

This is an uncharacterized protein from Homo sapiens (Human).